The sequence spans 481 residues: Tryptophan--tRNA ligase, cytoplasmic (481 aa).

Positions 12–68 (SPLELFNSIATQGELVRSLKAGNAPKDEIDSAVKMLLSLKMSYKAAMGEEYKAGCPP) constitute a WHEP-TRS domain. At lysine 158 the chain carries N6-succinyllysine. The 'HIGH' region motif lies at 168-177 (PSSEAMHLGH). The short motif at 353-357 (KMSAS) is the 'KMSKS' region element. Serine 355 carries the phosphoserine modification.

The protein belongs to the class-I aminoacyl-tRNA synthetase family. In terms of assembly, homodimer. Interacts with oxidized form of GAPDH. Post-translationally, proteolytic cleavage generates 2 forms; T1-TrpRS and T2-TrpRS. As to expression, isoform 2 is widely expressed, isoform 1 is found only in embryonic stem cells.

The protein localises to the cytoplasm. It carries out the reaction tRNA(Trp) + L-tryptophan + ATP = L-tryptophyl-tRNA(Trp) + AMP + diphosphate + H(+). Its function is as follows. Catalyzes the attachment of tryptophan to tRNA(Trp) in a two-step reaction: tryptophan is first activated by ATP to form Trp-AMP and then transferred to the acceptor end of the tRNA(Trp). Could also possess an angiostatic activity. This Mus musculus (Mouse) protein is Tryptophan--tRNA ligase, cytoplasmic.